Reading from the N-terminus, the 172-residue chain is Calcium channel flower homolog (172 aa).

The Cytoplasmic portion of the chain corresponds to M1–R32. A helical transmembrane segment spans residues L33–I53. The Extracellular portion of the chain corresponds to H54–N57. The helical transmembrane segment at I58–F78 threads the bilayer. Residues C79–A102 are Cytoplasmic-facing. The chain crosses the membrane as a helical span at residues V103 to L123. The Extracellular segment spans residues G124–N125. Residues A126–K142 traverse the membrane as a helical segment. Residues K143–L172 are Cytoplasmic-facing.

Belongs to the calcium channel flower family. As to quaternary structure, interacts with adaptor protein complex 2 (AP-2). In terms of tissue distribution, detected in skin cells at low levels of expression (at protein level).

The protein localises to the cell membrane. It is found in the cytoplasmic vesicle. The protein resides in the secretory vesicle. Its subcellular location is the synaptic vesicle. It localises to the golgi apparatus. The protein localises to the vesicle. It is found in the early endosome. The protein resides in the recycling endosome. Its subcellular location is the endoplasmic reticulum membrane. Its function is as follows. Transmembrane protein which mediates synaptic endocytosis and fitness-based cell culling. In response to different stimulus strengths, controls two major modes of synaptic vesicle (SV) retrieval in hippocampal neurons; Clathrin-mediated endocytosis (CME) in response to mild stimulation and activity-dependent bulk endocytosis (ADBE) in response to strong stimulation. In cytotoxic T-lymphoocytes (CTLs) facilitates calcium-dependent endocytosis of cytotoxic granules at the immuno synapse. Different isoforms work as fitness fingerprints in 'loser' and 'winner' cells and thereby mediate win/lose decisions as part of the cell competition process. In terms of biological role, functions with the other flower isoforms to produce tissue-specific fitness fingerprints that identify unfit or fit cells during cell selection processes in order to maintain tissue health. During cell competition, if levels of this isoform in cells is higher than in the surrounding neighboring cells, the cells are recognized as 'winner' cells, and do not undergo elimination via apoptosis. Functions with the other flower isoforms to produce tissue-specific fitness fingerprints that identify unfit or fit cells during cell selection processes in order to maintain tissue health. During cell competition, if levels of this isoform in unfit cells is higher than in the surrounding neighboring cells, the cells are recognized as 'loser' cells, and undergo elimination via apoptosis to be replaced by the surrounding healthy 'winner' cell population. The chain is Calcium channel flower homolog (CACFD1) from Homo sapiens (Human).